Reading from the N-terminus, the 143-residue chain is Large ribosomal subunit protein uL11 (143 aa).

It belongs to the universal ribosomal protein uL11 family. In terms of assembly, part of the ribosomal stalk of the 50S ribosomal subunit. Interacts with L10 and the large rRNA to form the base of the stalk. L10 forms an elongated spine to which L12 dimers bind in a sequential fashion forming a multimeric L10(L12)X complex. One or more lysine residues are methylated.

Forms part of the ribosomal stalk which helps the ribosome interact with GTP-bound translation factors. The polypeptide is Large ribosomal subunit protein uL11 (Erythrobacter litoralis (strain HTCC2594)).